A 725-amino-acid chain; its full sequence is MEYKYSTIVDSSKWDPEGLIEGIPLRKHEAGDLEEVGSFRVQEDWRRLVGPVENPFRGSLGPEISFITYTVPECLPERLEAISYGLDYGFLHDDEIDTKIEEAELDDVGAALAQGGSTGKIQEGTKSSGKRKMAAQLLREMMALDPERAMTLAKSWAQGVQHSARRVEEKDWKSLDEYIPFRCMDLGYMHWHGLVTFGCAITVPEEEEEERRTLLEPAVIACLMTNDLFSYEKEKNDNNPQNAVAVIMKIHKCSEEEARDICKQRIRLECRKYARIVKETLARTDISLDLKRYIEIMQYTVSGNWAWSTQCPRYHADAKFNELQMLRAEHGVAKYPARYSLENRKNGANGVNGVNGINGVNGVNGVNGKRKRSGEETADDARTNGNGIKKPAHVLEYRDSLVLEDIVALSLDWNLPDLSDGVVVQPYKYLTSLPSKGFRDQAIDSLNTWLRVPTKTTKMIKDVIKMLHSASLMLDDIEDNSPLRRGKPSTHVIYGNAQTINSATYQYTEATGLAARLPNPTSLRIYLEEVQQLYIGQSYDLYWTHNALCPSIPEYLKMVDQKTGGLFRMLTRLMVSESPARSSILDQTLYPLSHLIGRFFQIRDDYQNLASAEYARQKGYAEDLDEGKYSFTLIHCINTLEAEASLASEKMALRAFLIKRRVDSSLSNESKREVLDIMKKTKSLEYTLGVLRALQAELEKEVDSLEAKFGEENFSLRMMLELLKV.

A (7Z)-ophiobola-7,19-dien-3-ol synthase region spans residues 1 to 322 (MEYKYSTIVD…RYHADAKFNE (322 aa)). Mg(2+)-binding residues include Asp93 and Asp97. A substrate-binding site is contributed by Asp93. Residues 93-97 (DDEID) carry the DDXXD 1 motif. Substrate is bound by residues 182–185 (RCMD), Asn226, 230–234 (SYEKE), and 313–314 (RY). The NSE/DTE motif lies at 226–234 (NDLFSYEKE). A geranylfarnesyl diphosphate synthase region spans residues 323-725 (LQMLRAEHGV…LRMMLELLKV (403 aa)). Residues 362–388 (GVNGVNGKRKRSGEETADDARTNGNGI) form a disordered region. Residues 373–382 (SGEETADDAR) are compositionally biased toward basic and acidic residues. Isopentenyl diphosphate contacts are provided by Lys436, Arg439, and His468. Asp475 and Asp479 together coordinate Mg(2+). The short motif at 475–479 (DDIED) is the DDXXD 2 element. Dimethylallyl diphosphate is bound at residue Arg484. Residue Arg485 coordinates isopentenyl diphosphate. Lys562, Thr563, Gln601, Asn608, Lys618, and Lys628 together coordinate dimethylallyl diphosphate.

It in the N-terminal section; belongs to the terpene synthase family. The protein in the C-terminal section; belongs to the FPP/GGPP synthase family. Mg(2+) serves as cofactor.

It catalyses the reaction isopentenyl diphosphate + (2E,6E)-farnesyl diphosphate = (2E,6E,10E)-geranylgeranyl diphosphate + diphosphate. The catalysed reaction is isopentenyl diphosphate + (2E,6E,10E)-geranylgeranyl diphosphate = (2E,6E,10E,14E)-geranylfarnesyl diphosphate + diphosphate. It carries out the reaction (2E,6E,10E,14E)-geranylfarnesyl diphosphate + H2O = ophiobolin F + diphosphate. It functions in the pathway secondary metabolite biosynthesis; terpenoid biosynthesis. Its function is as follows. Bifunctional sesterterpene synthase that converts isopentenyl diphosphate (IPP) and dimethylallyl diphosphate (DMAPP) into ophiobolin F. The C-terminal prenyltransferase (PT) domain of AcldOS converts isopentenyl diphosphate and dimethylallyl diphosphate into geranylfarnesyl diphosphate (GFPP), whereas the N-terminal terpene cyclase (TC) domain catalyzes the cyclization of GFPP to ophiobolin F. This chain is Ophiobolin F synthase, found in Aspergillus calidoustus.